Here is a 439-residue protein sequence, read N- to C-terminus: Phosphoribosylamine--glycine ligase (439 aa).

The ATP-grasp domain occupies R109–D317. Residue I136 to T195 coordinates ATP. The Mg(2+) site is built by Q275, E287, and N289. 3 residues coordinate Mn(2+): Q275, E287, and N289.

This sequence belongs to the GARS family. Mg(2+) serves as cofactor. The cofactor is Mn(2+).

The catalysed reaction is 5-phospho-beta-D-ribosylamine + glycine + ATP = N(1)-(5-phospho-beta-D-ribosyl)glycinamide + ADP + phosphate + H(+). It participates in purine metabolism; IMP biosynthesis via de novo pathway; N(1)-(5-phospho-D-ribosyl)glycinamide from 5-phospho-alpha-D-ribose 1-diphosphate: step 2/2. The sequence is that of Phosphoribosylamine--glycine ligase from Pyrococcus furiosus (strain ATCC 43587 / DSM 3638 / JCM 8422 / Vc1).